The sequence spans 387 residues: Sialic acid-binding Ig-like lectin 13 (387 aa).

Residues 1 to 15 (MLPLLLPLLWAGALA) form the signal peptide. One can recognise an Ig-like V-type domain in the interval 16-138 (LEGIFQLEVP…KDPPLSVHVT (123 aa)). Residues 16–341 (LEGIFQLEVP…QRKSGPMAEV (326 aa)) are Extracellular-facing. 3 disulfides stabilise this stretch: Cys-35–Cys-168, Cys-40–Cys-100, and Cys-162–Cys-211. Asn-99 carries an N-linked (GlcNAc...) asparagine glycan. Arg-118 is an N-acetylneuraminate binding site. An Ig-like C2-type 1 domain is found at 144 to 227 (PDILIPGALK…AGVTTTRTVR (84 aa)). Asn-229, Asn-236, and Asn-254 each carry an N-linked (GlcNAc...) asparagine glycan. The Ig-like C2-type 2 domain maps to 234 to 326 (PQNLTLTVFQ…RNPLGSQQVS (93 aa)). Cys-270 and Cys-314 are disulfide-bonded. A helical transmembrane segment spans residues 342-362 (VLVAIGEAAVKILLLFLCLII). Residues 363 to 387 (LRVKSHRRKAAKAATGVEAAKVVKG) lie on the Cytoplasmic side of the membrane.

Belongs to the immunoglobulin superfamily. SIGLEC (sialic acid binding Ig-like lectin) family.

Its subcellular location is the membrane. Functionally, putative adhesion molecule that mediates sialic-acid dependent binding to cells. In Pan troglodytes (Chimpanzee), this protein is Sialic acid-binding Ig-like lectin 13 (SIGLEC13).